Reading from the N-terminus, the 370-residue chain is Platelet-derived growth factor D (370 aa).

A signal peptide spans 1–23; the sequence is MHRLILVSILVCANFCCYRDTFA. The 119-residue stretch at 52 to 170 folds into the CUB domain; sequence RDENIRVTGT…PGFKIYYSFV (119 aa). C109 and C131 are disulfide-bonded. N-linked (GlcNAc...) asparagine glycosylation occurs at N276. 2 disulfides stabilise this stretch: C302–C360 and C306–C362.

The protein belongs to the PDGF/VEGF growth factor family. As to quaternary structure, homodimer; disulfide-linked. Interacts with PDGFRB homodimers, and with heterodimers formed by PDGFRA and PDGFRB. Activated by proteolytic cleavage. Proteolytic removal of the N-terminal CUB domain releasing the core domain is necessary for unmasking the receptor-binding epitopes of the core domain. Cleavage after Arg-247 or Arg-249 by urokinase plasminogen activator gives rise to the active form. In terms of tissue distribution, widely expressed. Expressed at high levels in the kidney, adrenal glands, eye and CNS. In the kidney the localization is confined to arterial and arteriolar vascular smooth muscle cells and is also detected at low levels in the glomeruli In the eye in the anterior segment it is localized to the iris and ciliary body. In the retina localizes intensely to the outer plexiform layer, which contains photoreceptor axons and the synaptic layer between photoreceptors and second order neurons. In the spinal cord, prominently expressed in the motorneurons.

It is found in the secreted. Growth factor that plays an essential role in the regulation of embryonic development, cell proliferation, cell migration, survival and chemotaxis. Potent mitogen for cells of mesenchymal origin. Plays an important role in wound healing. Induces macrophage recruitment, increased interstitial pressure, and blood vessel maturation during angiogenesis. May play an important role in control of lens epithelial cell proliferation. Can initiate events that lead to a mesangial proliferative glomerulonephritis, including influx of monocytes and macrophages and production of extracellular matrix. The chain is Platelet-derived growth factor D (Pdgfd) from Rattus norvegicus (Rat).